The primary structure comprises 310 residues: Beta-ketoacyl-[acyl-carrier-protein] synthase III 1 (310 aa).

Residues Cys112 and His235 contribute to the active site. Residues 236-240 (QANIR) are ACP-binding. Asn265 is a catalytic residue.

Belongs to the thiolase-like superfamily. FabH family. In terms of assembly, homodimer.

It is found in the cytoplasm. The enzyme catalyses malonyl-[ACP] + acetyl-CoA + H(+) = 3-oxobutanoyl-[ACP] + CO2 + CoA. Its pathway is lipid metabolism; fatty acid biosynthesis. Catalyzes the condensation reaction of fatty acid synthesis by the addition to an acyl acceptor of two carbons from malonyl-ACP. Catalyzes the first condensation reaction which initiates fatty acid synthesis and may therefore play a role in governing the total rate of fatty acid production. Possesses both acetoacetyl-ACP synthase and acetyl transacylase activities. Its substrate specificity determines the biosynthesis of branched-chain and/or straight-chain of fatty acids. The protein is Beta-ketoacyl-[acyl-carrier-protein] synthase III 1 of Bacillus anthracis.